The following is a 792-amino-acid chain: 5-methyltetrahydropteroyltriglutamate--homocysteine methyltransferase (792 aa).

Residues 16–19 (RELK) and K112 contribute to the 5-methyltetrahydropteroyltri-L-glutamate site. L-homocysteine is bound by residues 432-434 (IGS) and E485. L-methionine contacts are provided by residues 432 to 434 (IGS) and E485. 5-methyltetrahydropteroyltri-L-glutamate is bound by residues 516-517 (RC) and W562. Residue D600 participates in L-homocysteine binding. D600 contributes to the L-methionine binding site. E606 is a binding site for 5-methyltetrahydropteroyltri-L-glutamate. Zn(2+)-binding residues include H642, C644, and E666. The Proton donor role is filled by H695. Residue C727 participates in Zn(2+) binding.

It belongs to the vitamin-B12 independent methionine synthase family. Zn(2+) serves as cofactor.

It catalyses the reaction 5-methyltetrahydropteroyltri-L-glutamate + L-homocysteine = tetrahydropteroyltri-L-glutamate + L-methionine. It participates in amino-acid biosynthesis; L-methionine biosynthesis via de novo pathway; L-methionine from L-homocysteine (MetE route): step 1/1. Catalyzes the transfer of a methyl group from 5-methyltetrahydrofolate to homocysteine resulting in methionine formation. The sequence is that of 5-methyltetrahydropteroyltriglutamate--homocysteine methyltransferase from Cupriavidus necator (strain ATCC 17699 / DSM 428 / KCTC 22496 / NCIMB 10442 / H16 / Stanier 337) (Ralstonia eutropha).